The primary structure comprises 300 residues: tRNA dimethylallyltransferase (300 aa).

ATP is bound at residue 18-25 (GPTATGKS). 20–25 (TATGKS) contributes to the substrate binding site. The interaction with substrate tRNA stretch occupies residues 43-46 (DSRQ).

It belongs to the IPP transferase family. In terms of assembly, monomer. It depends on Mg(2+) as a cofactor.

It carries out the reaction adenosine(37) in tRNA + dimethylallyl diphosphate = N(6)-dimethylallyladenosine(37) in tRNA + diphosphate. Functionally, catalyzes the transfer of a dimethylallyl group onto the adenine at position 37 in tRNAs that read codons beginning with uridine, leading to the formation of N6-(dimethylallyl)adenosine (i(6)A). This Cyanothece sp. (strain PCC 7425 / ATCC 29141) protein is tRNA dimethylallyltransferase.